Here is a 257-residue protein sequence, read N- to C-terminus: MTPSEFRQSVRRGAFRGPTAGHCGPFAQANLAILPDAYAHDFLRFCQANPKACPLLGVGEPGAFRIDALGDDLDIRTDVPSYNVYRDGRLTERVESLDALWRDDFVVFAIGCSFSFEDMLAREGIGLRHVEEGRNVPMYRTSIANRRAGIFGGQLVVSMRPLRGADAIRAVQITSRFPGVHGAPIHIGDPRELGIEDLNAPEFGDAVTIRDGELPVFWACGVTPQTALMDAKLPIAIAHTPGYMLMTDITNASLAVF.

This sequence belongs to the D-glutamate cyclase family.

The protein is Putative hydro-lyase Bcenmc03_3969 of Burkholderia orbicola (strain MC0-3).